The sequence spans 605 residues: Isocitrate dehydrogenase kinase/phosphatase (605 aa).

ATP-binding positions include 327 to 333 (APGIKGL) and lysine 348. The active site involves aspartate 383.

This sequence belongs to the AceK family.

The protein resides in the cytoplasm. The enzyme catalyses L-seryl-[isocitrate dehydrogenase] + ATP = O-phospho-L-seryl-[isocitrate dehydrogenase] + ADP + H(+). Its function is as follows. Bifunctional enzyme which can phosphorylate or dephosphorylate isocitrate dehydrogenase (IDH) on a specific serine residue. This is a regulatory mechanism which enables bacteria to bypass the Krebs cycle via the glyoxylate shunt in response to the source of carbon. When bacteria are grown on glucose, IDH is fully active and unphosphorylated, but when grown on acetate or ethanol, the activity of IDH declines drastically concomitant with its phosphorylation. The protein is Isocitrate dehydrogenase kinase/phosphatase of Burkholderia orbicola (strain AU 1054).